The chain runs to 548 residues: Chaperonin GroEL (548 aa).

Residues 30–33, lysine 51, 87–91, glycine 415, 479–481, and aspartate 495 each bind ATP; these read TLGP, DGTTT, and NAA. The interval 525 to 548 is disordered; sequence PKEDKTSDASSSPAGGMGGMGGMM. Gly residues predominate over residues 539–548; that stretch reads GGMGGMGGMM.

The protein belongs to the chaperonin (HSP60) family. As to quaternary structure, forms a cylinder of 14 subunits composed of two heptameric rings stacked back-to-back. Interacts with the co-chaperonin GroES.

Its subcellular location is the cytoplasm. The catalysed reaction is ATP + H2O + a folded polypeptide = ADP + phosphate + an unfolded polypeptide.. Functionally, together with its co-chaperonin GroES, plays an essential role in assisting protein folding. The GroEL-GroES system forms a nano-cage that allows encapsulation of the non-native substrate proteins and provides a physical environment optimized to promote and accelerate protein folding. This Buchnera aphidicola subsp. Rhopalosiphum maidis protein is Chaperonin GroEL.